The chain runs to 308 residues: uncharacterized protein (308 aa).

Positions 1–18 (MKIILLFLAALASFTVHA) are cleaved as a signal peptide.

This is an uncharacterized protein from Escherichia coli (strain K12).